The chain runs to 350 residues: Inactive ADP-ribosyltransferase arh2 (350 aa).

It belongs to the ADP-ribosylglycohydrolase family.

It is found in the cytoplasm. The protein localises to the myofibril. The protein resides in the sarcomere. Functionally, required for myofibril assembly and outgrowth of the cardiac chambers in the developing heart. Appears to be catalytically inactive, showing no activity against O-acetyl-ADP-ribose. The sequence is that of Inactive ADP-ribosyltransferase arh2 (adprhl1) from Danio rerio (Zebrafish).